Reading from the N-terminus, the 1365-residue chain is MSRRKQAKPRSVKAVEEAESTECASGWDSSVQTDAAVSERDSDRKESRAVGEDGEQSVTSHDERVGEEDLDDDSIFTCDNCQQDFECLADLTEHRTNHCPADGDDDPGLSWVASSPSSKDVASPSQMLGDGCCDMGMGTGEEEGGSGLPYPCQFCDKSFSRLSYLKRHEQIHSDKLPFKCTFCSRLFKHKRSRDRHVKLHTGDKKYSCQECEAAFSRSDHLKIHLKTHSSSKPFKCSICKRGFSSTSSLQSHMQAHRKNKEHLAKKDQGKRDGSSSDVTEQDQDLYMCDYCEETFSQTDELEKHVLTQHPQLSDRAELQCIHCPEIFSDEGTLLTHIDRTHANKKHKCPMCAEQFPSVEDVYCHLDSHRQPDSSNHSASPDPVLGSVASMSSATPDSSASLERGSTPDSTLKPGQSRRKLAPSSDHDDGTWSGKVTYSCPYCSKRDFNSLAVLEIHLKTIHADKPQQSHTCQLCLETLPTLYNLNEHVRKAHRSSGNSASNFPLLQFSNVSAFHCNYCPDMFADINSLQEHIRVSHCLSGGVVAGSTTLEGNHAFFCNQCSMGFLTESSLTEHIQQTHCSSVGGVTKMESPVLQPSQSFMEVYSCPYCTNSPIFGSLLKLTKHIKENHKNIPLANNKRKVKVADLSPASSDVEISSPKRHRVTGDSTPAVANGDYPCNQCDLRFSSFEGFQAHLKSHLELLLRRQSCPQCNKEDFDSQEALLQHLTIHYTTTSTQYVCESCDKQFSSVDDLQKHLLDMHTFVLYHCTLCQEVFDSKVSIQVHLAVKHSNEKKMYRCTACAWDFRKESDLQLHVKHSHLGHPASTGAPGKARKCIFCGETFGTEVELQCHITTHSKKYNCRLCGKAFHAIVLLERHLREKHCIFDGGNGNGNGGSQNGTPNGVTQSSKRSTAGSTAAAEQADLQNMLLKGGSQETANSHEASGGEEELDASEPMYACDICGAAYTMESLLQNHRLRDHNIRPGEDDAGSRKKKADFIKGNHKCNVCSRTFFSENGLREHAQTHRGPAKHYMCPICGERFPSLLTLTEHKVTHSKSLDTGTCRICKMPLQSEEEFIEHCQMHPDLRNSLTGFRCVVCMQTVTSTLELKIHGTFHMQKLSSSGGSGGGGGSASSSPNGQLQAHKLYKCALCLKDFKNKQELVKIDVNGLPYGLCAGCMSRGTNGQSPTVVVTPQEAGDKGTTGLRCSECAVKFETLEDLESHIQVDHTEMSPETSGAKKVTDASPVPKKKTYQCIKCQMTFETEREIQIHVANHMIEEGINHECKLCNQMFDSPAKLLCHLIEHSFEGMGGTFKCPVCFTVFVQANKLQQHIFAVHGQEDKIYDCSQCPQKFFFQTELQNHTLSQHAQ.

Basic residues predominate over residues M1 to S11. A disordered region spans residues M1 to D69. A compositionally biased stretch (basic and acidic residues) spans V37–G51. The segment at F76–H98 adopts a C2H2-type 1 zinc-finger fold. Residues C99–Q126 are disordered. Residues V112–Q126 show a composition bias toward low complexity. 4 C2H2-type zinc fingers span residues Y150 to H172, F178 to H200, Y206 to H228, and F234 to H256. The tract at residues Q250–E280 is disordered. Basic and acidic residues predominate over residues E261–S274. C2H2-type zinc fingers lie at residues Y286–H309, L318–H341, and H346–H368. The interval D366–G429 is disordered. Low complexity predominate over residues S386–S400. The C2H2-type 9; degenerate zinc-finger motif lies at Y437–H461. 3 consecutive C2H2-type zinc fingers follow at residues H469–H492, F513–H536, and F555–H578. The C2H2-type 13; atypical zinc-finger motif lies at Y603–H628. C2H2-type zinc fingers lie at residues Y675–H697, Q705–H728, Y736–H759, Y764–H787, Y794–H817, R831–H853, and Y857–H880. Positions G885–Q895 are enriched in gly residues. Positions G885–A916 are disordered. Residues V902–S913 are compositionally biased toward polar residues. A C2H2-type 21; degenerate zinc finger spans residues Y954–D976. 8 C2H2-type zinc fingers span residues H1000–H1022, Y1029–H1051, F1090–H1112, L1201–H1224, Y1249–H1271, H1279–H1301, F1310–H1333, and Y1340–H1363.

It belongs to the krueppel C2H2-type zinc-finger protein family.

Its subcellular location is the nucleus. Transcription factor that can both act as an activator or a repressor depending on the context. Plays a central role in BMP signaling and olfactory neurogenesis. Associates with SMADs in response to bmp2 leading to activate transcription of BMP target genes. Acts as a transcriptional repressor involved in terminal olfactory receptor neurons differentiation. Involved in olfactory neurogenesis by participating in a developmental switch that regulates the transition from differentiation to maturation in olfactory receptor neurons. This chain is Zinc finger protein 423 (znf423), found in Danio rerio (Zebrafish).